Consider the following 432-residue polypeptide: Adenosylhomocysteinase (432 aa).

The disordered stretch occupies residues 1–24 (MSAYSPLSAQLDADTDVDVESTRT). Substrate-binding residues include aspartate 137 and glutamate 162. 163–165 (TTT) provides a ligand contact to NAD(+). Substrate contacts are provided by lysine 192 and aspartate 196. NAD(+)-binding positions include asparagine 197, 226–231 (GYGYCG), glutamate 249, asparagine 284, 305–307 (AGH), and asparagine 352.

The protein belongs to the adenosylhomocysteinase family. It depends on NAD(+) as a cofactor.

It is found in the cytoplasm. The catalysed reaction is S-adenosyl-L-homocysteine + H2O = L-homocysteine + adenosine. Its pathway is amino-acid biosynthesis; L-homocysteine biosynthesis; L-homocysteine from S-adenosyl-L-homocysteine: step 1/1. May play a key role in the regulation of the intracellular concentration of adenosylhomocysteine. In Haloquadratum walsbyi (strain DSM 16790 / HBSQ001), this protein is Adenosylhomocysteinase.